A 227-amino-acid chain; its full sequence is tRNA (guanine-N(1)-)-methyltransferase (227 aa).

S-adenosyl-L-methionine contacts are provided by residues glycine 107 and 127 to 132 (LGDFIL).

This sequence belongs to the RNA methyltransferase TrmD family. As to quaternary structure, homodimer.

The protein localises to the cytoplasm. It catalyses the reaction guanosine(37) in tRNA + S-adenosyl-L-methionine = N(1)-methylguanosine(37) in tRNA + S-adenosyl-L-homocysteine + H(+). Functionally, specifically methylates guanosine-37 in various tRNAs. The protein is tRNA (guanine-N(1)-)-methyltransferase of Mesomycoplasma hyopneumoniae (strain 7448) (Mycoplasma hyopneumoniae).